Consider the following 894-residue polypeptide: Alanine--tRNA ligase (894 aa).

It belongs to the class-II aminoacyl-tRNA synthetase family.

The protein localises to the cytoplasm. It catalyses the reaction tRNA(Ala) + L-alanine + ATP = L-alanyl-tRNA(Ala) + AMP + diphosphate. Functionally, catalyzes the attachment of alanine to tRNA(Ala) in a two-step reaction: alanine is first activated by ATP to form Ala-AMP and then transferred to the acceptor end of tRNA(Ala). Also edits incorrectly charged Ser-tRNA(Ala) and Gly-tRNA(Ala) via its editing domain. This is Alanine--tRNA ligase (alaS) from Leuconostoc citreum (strain KM20).